Consider the following 242-residue polypeptide: Uridylate kinase (242 aa).

ATP is bound at residue 13–16 (KLSG). Position 55 (Gly55) interacts with UMP. ATP contacts are provided by Gly56 and Arg60. UMP is bound by residues Asp75 and 136–143 (TGNPFFTT). The ATP site is built by Thr163, Tyr169, and Asp172.

This sequence belongs to the UMP kinase family. In terms of assembly, homohexamer.

It localises to the cytoplasm. It carries out the reaction UMP + ATP = UDP + ADP. It functions in the pathway pyrimidine metabolism; CTP biosynthesis via de novo pathway; UDP from UMP (UMPK route): step 1/1. Inhibited by UTP. Catalyzes the reversible phosphorylation of UMP to UDP. The polypeptide is Uridylate kinase (Zymomonas mobilis subsp. mobilis (strain ATCC 31821 / ZM4 / CP4)).